We begin with the raw amino-acid sequence, 482 residues long: Probable cytochrome P450 508D1 (482 aa).

A helical transmembrane segment spans residues 1 to 21 (MVYLKNILIFLIIFLINPLVK). Cys-428 serves as a coordination point for heme.

This sequence belongs to the cytochrome P450 family. Heme serves as cofactor.

It localises to the membrane. This Dictyostelium discoideum (Social amoeba) protein is Probable cytochrome P450 508D1 (cyp508D1).